A 241-amino-acid chain; its full sequence is Protein-L-isoaspartate O-methyltransferase (241 aa).

Residue serine 69 is part of the active site.

This sequence belongs to the methyltransferase superfamily. L-isoaspartyl/D-aspartyl protein methyltransferase family.

The protein localises to the cytoplasm. The enzyme catalyses [protein]-L-isoaspartate + S-adenosyl-L-methionine = [protein]-L-isoaspartate alpha-methyl ester + S-adenosyl-L-homocysteine. Its function is as follows. Catalyzes the methyl esterification of L-isoaspartyl residues in peptides and proteins that result from spontaneous decomposition of normal L-aspartyl and L-asparaginyl residues. It plays a role in the repair and/or degradation of damaged proteins. This Hyperthermus butylicus (strain DSM 5456 / JCM 9403 / PLM1-5) protein is Protein-L-isoaspartate O-methyltransferase.